Here is a 407-residue protein sequence, read N- to C-terminus: Heparan-sulfate 6-O-sulfotransferase 1-B (407 aa).

The Cytoplasmic segment spans residues 8-14; that stretch reads MVERTSK. The helical; Signal-anchor for type II membrane protein transmembrane segment at 15–35 threads the bilayer; sequence FLLIVVGSVFFMLILYQYVAP. Residues 36–407 lie on the Lumenal side of the membrane; the sequence is GVINFGSPHG…DYMNHIINGW (372 aa). A 3'-phosphoadenylyl sulfate-binding site is contributed by 92 to 100; the sequence is HIQKTGGTT. Substrate is bound by residues 122 to 123, Arg-139, Trp-144, and His-149; that span reads KK. His-149 (proton acceptor) is an active-site residue. Residues Arg-183 and Ser-191 each coordinate 3'-phosphoadenylyl sulfate. His-195 and Trp-202 together coordinate substrate. An N-linked (GlcNAc...) asparagine glycan is attached at Asn-262. 315–317 is a 3'-phosphoadenylyl sulfate binding site; that stretch reads MQY. N-linked (GlcNAc...) asparagine glycosylation is present at Asn-318. 3'-phosphoadenylyl sulfate is bound at residue 321-322; that stretch reads RA. Asn-329 carries N-linked (GlcNAc...) asparagine glycosylation.

It belongs to the sulfotransferase 6 family. In terms of tissue distribution, during early somitogenesis, first expressed in floor plate and somites. During mid-somitogenesis, expressed strongly in somites and more weakly in eye and hindbrain. During late somitogenesis, expressed in eye, hindbrain and posterior somites. At 24 hours post-fertilization (hpf), expressed in lens, forebrain, hindbrain, otic vesicle, anterior spinal cord neurons and posterior somites. At 36 hpf, expressed in the retinal ciliary marginal zone, brain, pancreas and weakly in pectoral fin. At 48 hpf, expressed in the retinal ciliary marginal zone, retinal ganglion cells, rhombomeres, otic vesicle and weakly in pectoral fin.

It localises to the membrane. The enzyme catalyses alpha-D-glucosaminyl-[heparan sulfate](n) + 3'-phosphoadenylyl sulfate = 6-sulfo-alpha-D-glucosaminyl-[heparan sulfate](n) + adenosine 3',5'-bisphosphate + H(+). Functionally, 6-O-sulfation enzyme which catalyzes the transfer of sulfate from 3'-phosphoadenosine 5'-phosphosulfate (PAPS) to position 6 of the N-sulfoglucosamine residue (GlcNS) of heparan sulfate. This chain is Heparan-sulfate 6-O-sulfotransferase 1-B, found in Danio rerio (Zebrafish).